The following is a 1634-amino-acid chain: Protein TIC 214 (1634 aa).

A run of 5 helical transmembrane segments spans residues 25–45, 53–73, 94–116, 133–153, and 172–192; these read FIIG…YVAL, ILAL…SFFA, HFIL…LITI, FAWF…LVWI, and IFVI…SIQC. 2 disordered regions span residues 216–242 and 1365–1395; these read RERL…SESE and QQKS…STKS. The segment covering 1386-1395 has biased composition (basic and acidic residues); it reads KYLEEDSTKS.

It belongs to the TIC214 family. As to quaternary structure, part of the Tic complex.

Its subcellular location is the plastid. The protein localises to the chloroplast inner membrane. Its function is as follows. Involved in protein precursor import into chloroplasts. May be part of an intermediate translocation complex acting as a protein-conducting channel at the inner envelope. This Cuscuta exaltata (Tall dodder) protein is Protein TIC 214.